A 321-amino-acid chain; its full sequence is Glycolipid transfer protein domain-containing protein 2 (321 aa).

Belongs to the GLTP family.

This chain is Glycolipid transfer protein domain-containing protein 2 (Gltpd2), found in Mus musculus (Mouse).